Reading from the N-terminus, the 604-residue chain is Glucose-methanol-choline family oxidoreductase mfmG (604 aa).

The N-terminal stretch at 1 to 24 is a signal peptide; that stretch reads MYMLRPSSLLLATGLLNQGSSVLA. Residue asparagine 32 is glycosylated (N-linked (GlcNAc...) asparagine). Residues 44–45 and 65–66 contribute to the FAD site; these read TA and EA. Residues asparagine 76 and asparagine 97 are each glycosylated (N-linked (GlcNAc...) asparagine). FAD is bound at residue 126–129; the sequence is NFMA. 4 N-linked (GlcNAc...) asparagine glycosylation sites follow: asparagine 260, asparagine 265, asparagine 401, and asparagine 460. Residue histidine 538 is the Proton acceptor of the active site. Residues alanine 572 and 584-585 contribute to the FAD site; that span reads PQ.

It belongs to the GMC oxidoreductase family. As to quaternary structure, homodimer. Requires FAD as cofactor.

Oxidoreductase; part of the gene cluster that mediates the biosynthesis of the phthalide-terpenoid hybrid 11'-O-desmethylfendlerol. MfmG seems not to be involved directly in the biosynthesis of 11'-O-desmethylfendlerol and its role has still to be determined. The biosynthesis of 11'-O-desmethylfendlerol begins with the NR-PKS mfmB that forms 3,5-dimethylorsellinic acid (DMOA), which is then transformed into the phthalide 5,7-dihydroxy-4-(hydroxymethyl)-6-methylphthalide by the cytochrome P450 monooxygenase mfmA and the hydrolase mfmC. Subsequently, the methyltransferase mfmE catalyzes 7-O-methylation to yield 5-hydroxy-4-(hydroxymethyl)-7-methoxy-6-methylphthalide, which undergoes C-3 hydroxylation by the cytochrome P450 monooxygenase mfmF. The resultant cyclopolic acid (2,5-dihydroxy-4-(hydroxymethyl)-7-methoxy-6-methylphthalide) is then farnesylated by the DMATS-type prenyltransferase mfmD to afford 5-O-farnesylcyclopolic acid. Finally, the Pyr4-family terpene cyclase mfmH cyclizes the farnesyl moiety of 5-O-farnesylcyclopolic acid into a drimane-like structure, thus completing the biosynthesis of 11'-O-desmethylfendlerol. The polypeptide is Glucose-methanol-choline family oxidoreductase mfmG (Annulohypoxylon moriforme (Filamentous fungus)).